A 146-amino-acid chain; its full sequence is Large ribosomal subunit protein uL16 (146 aa).

It belongs to the universal ribosomal protein uL16 family. Part of the 50S ribosomal subunit.

Its function is as follows. Binds 23S rRNA and is also seen to make contacts with the A and possibly P site tRNAs. The sequence is that of Large ribosomal subunit protein uL16 from Lactobacillus acidophilus (strain ATCC 700396 / NCK56 / N2 / NCFM).